The primary structure comprises 332 residues: Fructose-1,6-bisphosphatase class 1 (332 aa).

Residues glutamate 89, aspartate 110, leucine 112, and aspartate 113 each contribute to the Mg(2+) site. Substrate is bound by residues 113–116, asparagine 206, tyrosine 239, 257–259, and lysine 269; these read DGSS and YLY. Position 275 (glutamate 275) interacts with Mg(2+).

It belongs to the FBPase class 1 family. As to quaternary structure, homotetramer. Mg(2+) is required as a cofactor.

It is found in the cytoplasm. The enzyme catalyses beta-D-fructose 1,6-bisphosphate + H2O = beta-D-fructose 6-phosphate + phosphate. It participates in carbohydrate biosynthesis; gluconeogenesis. The polypeptide is Fructose-1,6-bisphosphatase class 1 (Erwinia tasmaniensis (strain DSM 17950 / CFBP 7177 / CIP 109463 / NCPPB 4357 / Et1/99)).